We begin with the raw amino-acid sequence, 263 residues long: 4-hydroxy-tetrahydrodipicolinate reductase (263 aa).

NAD(+)-binding positions include G8 to M13, D34, G99 to T101, and S125 to Y128. The active-site Proton donor/acceptor is the H157. H158 is a (S)-2,3,4,5-tetrahydrodipicolinate binding site. K161 serves as the catalytic Proton donor. A (S)-2,3,4,5-tetrahydrodipicolinate-binding site is contributed by G167–T168.

This sequence belongs to the DapB family.

It localises to the cytoplasm. The enzyme catalyses (S)-2,3,4,5-tetrahydrodipicolinate + NAD(+) + H2O = (2S,4S)-4-hydroxy-2,3,4,5-tetrahydrodipicolinate + NADH + H(+). The catalysed reaction is (S)-2,3,4,5-tetrahydrodipicolinate + NADP(+) + H2O = (2S,4S)-4-hydroxy-2,3,4,5-tetrahydrodipicolinate + NADPH + H(+). It participates in amino-acid biosynthesis; L-lysine biosynthesis via DAP pathway; (S)-tetrahydrodipicolinate from L-aspartate: step 4/4. Its function is as follows. Catalyzes the conversion of 4-hydroxy-tetrahydrodipicolinate (HTPA) to tetrahydrodipicolinate. This chain is 4-hydroxy-tetrahydrodipicolinate reductase, found in Methanococcoides burtonii (strain DSM 6242 / NBRC 107633 / OCM 468 / ACE-M).